Here is a 376-residue protein sequence, read N- to C-terminus: MAKRDYYEILGVDRGADKKEIKKAYRRLARKYHPDVSDDPDAAEKFKEISEAYAVLSDDEKRARYDRFGHAGMDGFSQEDIFNNINFEDIFSGLGFDIGNIFDMFGFGGGRRHGPQRGADISYTLDISLEDAYNGLETDIRVPHTKKCPVCHGSRAEPGTGTRTCQTCGGSGQVRQVRNTILGQMMNITTCPDCQGEGTVVEKPCSNCNGKGVVRKTSTIHVKVPAGVETGSRLRVPGEGEMGLRGGEPGDLYVVIKVKPHSIFRREGANLYTEKPISFVQAALGDTVEVPTLDRPVKLRIPAGTQSGTTFRVKGHGMPHLKWNGYGNLYVKVKVVTPRKLSPRQKELLREFASISGDEIHEDKGFFDKVKDAIIH.

One can recognise a J domain in the interval 5–69 (DYYEILGVDR…EKRARYDRFG (65 aa)). The CR-type zinc finger occupies 135 to 217 (GLETDIRVPH…CNGKGVVRKT (83 aa)). Positions 148, 151, 165, 168, 191, 194, 205, and 208 each coordinate Zn(2+). 4 CXXCXGXG motif repeats span residues 148-155 (CPVCHGSR), 165-172 (CQTCGGSG), 191-198 (CPDCQGEG), and 205-212 (CSNCNGKG).

It belongs to the DnaJ family. In terms of assembly, homodimer. Zn(2+) is required as a cofactor.

It is found in the cytoplasm. Its function is as follows. Participates actively in the response to hyperosmotic and heat shock by preventing the aggregation of stress-denatured proteins and by disaggregating proteins, also in an autonomous, DnaK-independent fashion. Unfolded proteins bind initially to DnaJ; upon interaction with the DnaJ-bound protein, DnaK hydrolyzes its bound ATP, resulting in the formation of a stable complex. GrpE releases ADP from DnaK; ATP binding to DnaK triggers the release of the substrate protein, thus completing the reaction cycle. Several rounds of ATP-dependent interactions between DnaJ, DnaK and GrpE are required for fully efficient folding. Also involved, together with DnaK and GrpE, in the DNA replication of plasmids through activation of initiation proteins. This is Chaperone protein DnaJ from Methanothermobacter thermautotrophicus (strain ATCC 29096 / DSM 1053 / JCM 10044 / NBRC 100330 / Delta H) (Methanobacterium thermoautotrophicum).